The sequence spans 1150 residues: Serine/threonine-protein phosphatase 2A regulatory subunit B'' subunit alpha (1150 aa).

A disordered region spans residues 661–693 (PEVIKIQNKPEKKPGTPLPPPATSPSSPRPLSP). Positions 676–693 (TPLPPPATSPSSPRPLSP) are enriched in pro residues. 2 EF-hand domains span residues 758–793 (CPLY…LLNN) and 972–1007 (RNPT…QCER). Ca(2+)-binding residues include Asp985, Asp987, Asp989, and Glu996. Positions 1105-1132 (AQFQEGFEDYETDEPASPSEFGNKSNKI) are disordered.

PP2A consists of a common heterodimeric core enzyme, composed of a 36 kDa catalytic subunit (subunit C) and a 65 kDa constant regulatory subunit (PR65 or subunit A), that associates with a variety of regulatory subunits. Proteins that associate with the core dimer include three families of regulatory subunits B (the R2/B/PR55/B55, R3/B''/PR72/PR130/PR59 and R5/B'/B56 families), the 48 kDa variable regulatory subunit, viral proteins, and cell signaling molecules. Expressed in heart, brain, placenta, lung, muscle and kidney.

The B regulatory subunit might modulate substrate selectivity and catalytic activity, and might also direct the localization of the catalytic enzyme to a particular subcellular compartment. The chain is Serine/threonine-protein phosphatase 2A regulatory subunit B'' subunit alpha (PPP2R3A) from Homo sapiens (Human).